The chain runs to 211 residues: Adenylate kinase (211 aa).

An ATP-binding site is contributed by 10–15 (GAGKGT). The interval 30-59 (STGGILRAAIQKQTALGKKVQKVVEVGGLV) is NMP. AMP-binding positions include Thr-31, Arg-36, 57–59 (GLV), 85–88 (GFPR), and Gln-92. Residues 121-158 (GRRVCSACGSSYHVLFAQPKREGVCDRCRGVLVVREDD) form an LID region. Residue Arg-122 participates in ATP binding. Zn(2+) contacts are provided by Cys-125 and Cys-128. Residue 131 to 132 (SY) participates in ATP binding. The Zn(2+) site is built by Cys-145 and Cys-148. AMP-binding residues include Arg-155 and Arg-166. Pro-194 provides a ligand contact to ATP.

The protein belongs to the adenylate kinase family. Monomer.

Its subcellular location is the cytoplasm. It carries out the reaction AMP + ATP = 2 ADP. It participates in purine metabolism; AMP biosynthesis via salvage pathway; AMP from ADP: step 1/1. Catalyzes the reversible transfer of the terminal phosphate group between ATP and AMP. Plays an important role in cellular energy homeostasis and in adenine nucleotide metabolism. The sequence is that of Adenylate kinase from Treponema pallidum (strain Nichols).